Reading from the N-terminus, the 87-residue chain is uncharacterized protein (87 aa).

A helical transmembrane segment spans residues 42-62 (LADALYSAGSAAFTIAASLVA).

It belongs to the SPP1 holin family.

Its subcellular location is the membrane. This is an uncharacterized protein from Bacillus licheniformis.